The primary structure comprises 363 residues: Ribosome-binding ATPase YchF (363 aa).

Residues 3-256 (FKCGIVGLPN…LEDEEKVDFL (254 aa)) form the OBG-type G domain. 12-17 (NVGKST) is an ATP binding site. Mg(2+)-binding residues include serine 16 and threonine 36. Residues 278–361 (NLQTYFTAGV…QDGDVMHFRF (84 aa)) enclose the TGS domain.

The protein belongs to the TRAFAC class OBG-HflX-like GTPase superfamily. OBG GTPase family. YchF/OLA1 subfamily. Requires Mg(2+) as cofactor.

Its function is as follows. ATPase that binds to both the 70S ribosome and the 50S ribosomal subunit in a nucleotide-independent manner. This is Ribosome-binding ATPase YchF from Haemophilus ducreyi (strain 35000HP / ATCC 700724).